The primary structure comprises 88 residues: Putative septation protein SpoVG (88 aa).

This sequence belongs to the SpoVG family.

In terms of biological role, could be involved in septation. The sequence is that of Putative septation protein SpoVG from Lachnospira eligens (strain ATCC 27750 / DSM 3376 / VPI C15-48 / C15-B4) (Eubacterium eligens).